We begin with the raw amino-acid sequence, 185 residues long: Elongation factor P (185 aa).

Belongs to the elongation factor P family.

The protein resides in the cytoplasm. It participates in protein biosynthesis; polypeptide chain elongation. Its function is as follows. Involved in peptide bond synthesis. Stimulates efficient translation and peptide-bond synthesis on native or reconstituted 70S ribosomes in vitro. Probably functions indirectly by altering the affinity of the ribosome for aminoacyl-tRNA, thus increasing their reactivity as acceptors for peptidyl transferase. The sequence is that of Elongation factor P from Lysinibacillus sphaericus (strain C3-41).